The sequence spans 106 residues: ATP-dependent Clp protease adapter protein ClpS (106 aa).

Residues 1 to 20 (MKVDMSTSVKDDAQLEASRV) are disordered.

Belongs to the ClpS family. In terms of assembly, binds to the N-terminal domain of the chaperone ClpA.

Functionally, involved in the modulation of the specificity of the ClpAP-mediated ATP-dependent protein degradation. The chain is ATP-dependent Clp protease adapter protein ClpS from Chromobacterium violaceum (strain ATCC 12472 / DSM 30191 / JCM 1249 / CCUG 213 / NBRC 12614 / NCIMB 9131 / NCTC 9757 / MK).